Consider the following 457-residue polypeptide: Choline kinase alpha (457 aa).

A disordered region spans residues 1–86; sequence MKTKFCTGGE…PPADEQPEPR (86 aa). Over residues 13 to 32 the composition is skewed to low complexity; the sequence is PSPLGLLLSCGSGSAAPAPG. Pro residues predominate over residues 55-80; that stretch reads LALPPPPPLPLPLPLPQPPPPQPPAD. ATP-binding positions include 117–123, R146, and 207–213; these read RGGLSNM and QFIPSRR. Position 119–121 (119–121) interacts with phosphocholine; it reads GLS. Position 247 is an N6-acetyllysine (K247). S279 carries the post-translational modification Phosphoserine. Q308 and D330 together coordinate ATP.

It belongs to the choline/ethanolamine kinase family. In terms of assembly, homodimer. Heterodimer with CHKB. As to quaternary structure, monomer; acetylation by KAT5 promotes dissociation of the homodimer and monomerization. (Microbial infection) Interacts with PI4KA/PI4KIIIalpha; CHKA bridges PI4KA/PI4KIIIalpha and hepatitis C virus (HCV) non-structural protein 5A (NS5A) and potentiates NS5A-stimulated PI4KA activity, which then facilitates the targeting of the ternary complex to the ER for viral replication. In terms of processing, phosphorylated at Ser-279 by AMPK in response to glucose deprivation, leading to localization to lipid droplets. Post-translationally, acetylated by KAT5 at Lys-247 following phosphorylation by AMPK, leading to monomerization and conversion into a tyrosine-protein kinase.

Its subcellular location is the cytoplasm. The protein resides in the cytosol. The protein localises to the lipid droplet. The enzyme catalyses choline + ATP = phosphocholine + ADP + H(+). It carries out the reaction ethanolamine + ATP = phosphoethanolamine + ADP + H(+). The catalysed reaction is L-tyrosyl-[protein] + ATP = O-phospho-L-tyrosyl-[protein] + ADP + H(+). The protein operates within phospholipid metabolism; phosphatidylcholine biosynthesis; phosphocholine from choline: step 1/1. It participates in phospholipid metabolism; phosphatidylethanolamine biosynthesis; phosphatidylethanolamine from ethanolamine: step 1/3. Homodimerization or heterodimerization is required for the choline and ethanolamine kinase activities. In terms of biological role, plays a key role in phospholipid biosynthesis by catalyzing the phosphorylation of free choline to phosphocholine, the first step in phosphatidylcholine biosynthesis. Also phosphorylates ethanolamine, thereby contributing to phosphatidylethanolamine biosynthesis. Has higher activity with choline. May contribute to tumor cell growth. This isoform plays a key role in lipolysis of lipid droplets following glucose deprivation. In response to glucose deprivation, phosphorylated by AMPK, promoting localization to lipid droplets. Phosphorylation is followed by acetylation by KAT5, leading to dissociation of the homodimer into a monomer. Monomeric CHKA isoform 1 is converted into a tyrosine-protein kinase, which phosphorylates lipid droplet structural proteins PLIN2 and PLIN3, leading to lipolysis of lipid droplets. The sequence is that of Choline kinase alpha (CHKA) from Homo sapiens (Human).